The following is a 305-amino-acid chain: Ornithine carbamoyltransferase (305 aa).

Carbamoyl phosphate is bound by residues 52–55 (STRT), glutamine 79, arginine 103, and 130–133 (HPCQ). L-ornithine is bound by residues asparagine 161, aspartate 221, and 225–226 (SM). Carbamoyl phosphate contacts are provided by residues 261-262 (CL) and arginine 289.

It belongs to the aspartate/ornithine carbamoyltransferase superfamily. OTCase family.

Its subcellular location is the cytoplasm. It catalyses the reaction carbamoyl phosphate + L-ornithine = L-citrulline + phosphate + H(+). It functions in the pathway amino-acid biosynthesis; L-arginine biosynthesis; L-arginine from L-ornithine and carbamoyl phosphate: step 1/3. In terms of biological role, reversibly catalyzes the transfer of the carbamoyl group from carbamoyl phosphate (CP) to the N(epsilon) atom of ornithine (ORN) to produce L-citrulline. The sequence is that of Ornithine carbamoyltransferase from Methanocorpusculum labreanum (strain ATCC 43576 / DSM 4855 / Z).